Here is an 80-residue protein sequence, read N- to C-terminus: RNA-binding protein Hfq (80 aa).

In terms of domain architecture, Sm spans 10-70 (DLFLNTVRKQ…ISTIMPGQPM (61 aa)).

Belongs to the Hfq family. In terms of assembly, homohexamer.

In terms of biological role, RNA chaperone that binds small regulatory RNA (sRNAs) and mRNAs to facilitate mRNA translational regulation in response to envelope stress, environmental stress and changes in metabolite concentrations. Also binds with high specificity to tRNAs. The protein is RNA-binding protein Hfq of Rhizobium etli (strain CIAT 652).